The sequence spans 303 residues: MNPQELKSILSAGLLSFPVTDFNAQGDFNRAGYIKRLEWLAPYGASALFAAGGTGEFFSLAASEYSEIIKTAVDTCASSVPILAGVGGSTRQAIEYAQEAERLGAKGLLLLPHYLTEASQDGVAAHVEAVCKSVNIGVVVYNRNVCRLTAPLLERLAERCPNLIGYKDGLGDIELMVSIRRRLGDRFSYLGGLPTAEVYAAAYKALGVPVYSSAVFNFIPKTAMDFYHAIAREDHATVGKIIDDFFLPYLDIRNRKAGYAVSIVKAGAKIAGYDAGPVRAPLTDLTGEEYEMLAALIDKQGAQ.

Belongs to the DapA family.

The catalysed reaction is 5-dehydro-4-deoxy-D-glucarate + H(+) = 2,5-dioxopentanoate + CO2 + H2O. The protein operates within carbohydrate acid metabolism; D-glucarate degradation; 2,5-dioxopentanoate from D-glucarate: step 2/2. The sequence is that of Probable 5-dehydro-4-deoxyglucarate dehydratase from Pseudomonas fluorescens (strain Pf0-1).